A 148-amino-acid polypeptide reads, in one-letter code: SUMO-conjugating enzyme UBC9 (148 aa).

Residues Met-1–Met-147 form the UBC core domain. Residue Cys-85 is the Glycyl thioester intermediate of the active site.

The protein belongs to the ubiquitin-conjugating enzyme family. As to quaternary structure, interacts with CHIP. Highest expression in young stems and old leaves. Lowest levels in floral buds, anthers and young leaves.

It participates in protein modification; protein sumoylation. Accepts the ubiquitin-like protein SUMO/SMT3 from the E1 complex and catalyzes its covalent attachment to other proteins. Mediates the selective degradation of short-lived and abnormal proteins. The chain is SUMO-conjugating enzyme UBC9 (UBC9) from Arabidopsis thaliana (Mouse-ear cress).